A 504-amino-acid polypeptide reads, in one-letter code: Maturase K (504 aa).

Belongs to the intron maturase 2 family. MatK subfamily.

It localises to the plastid. It is found in the chloroplast. In terms of biological role, usually encoded in the trnK tRNA gene intron. Probably assists in splicing its own and other chloroplast group II introns. In Lobularia maritima (Sweet alyssum), this protein is Maturase K.